Reading from the N-terminus, the 263-residue chain is Pyrrolysine synthase (263 aa).

Residues leucine 8, valine 57, isoleucine 64, and alanine 107 each coordinate L-pyrrolysine. NAD(+) contacts are provided by lysine 155, valine 156, aspartate 175, cysteine 210, proline 228, isoleucine 230, and glutamate 249.

This sequence belongs to the PylD family.

It catalyses the reaction (3R)-3-methyl-D-ornithyl-N(6)-L-lysine + NAD(+) = L-pyrrolysine + NH4(+) + NADH + 2 H(+). It functions in the pathway amino-acid biosynthesis; L-pyrrolysine biosynthesis. In terms of biological role, catalyzes the ultimate step of the pyrrolysine biosynthesis pathway by converting the isopeptide (3R)-3-methyl-D-ornithyl-N(6)-L-lysine to the 22nd proteinogenic amino acid. Is able to use surrogate substrates such as (3R)-D-ornithyl-N(6)-L-lysine in vitro. This Methanosarcina barkeri (strain Fusaro / DSM 804) protein is Pyrrolysine synthase.